The chain runs to 1199 residues: MISISEIHLKNFKSFKNTKLKIPDGFTAILGPNGSGKSNTIDGICFVLGKTSAKSLRAGKFNQLITYHNGKRADYAEVTLFFDNINREIPIDSDKVGICRKVKLNGDNNYYVVWYEVEKQNTKINTESSQKKTSKASKVEKRRRMKKNEVLDLLSKISLIADGPNIILQGDLLRIIDTSPNERRKILDEVSGVAEFDEKSEKAKKELSQAREYIEKIDIRINEVRANLEKLKKEKEDAEKYTVYNKKLKVTKYILTSKKVEFLKMVLDETKDEIEALKETKNCYIQDISNIDSEIIGLKVKINELVNELNEKGSEEVMELHKSIKELEVNLNNDKNALENAIDDLKHTLKMEESKNNDLNETKEKINNIRIDTLKKEAEAKVLIKEIEKLNEERQNLEKKVEQSESQVKALKNQESKLSERINDTQKELYGLKNELNQLENTLNNRTFDYQKNNETIENLTNQIAEFSDLEDTKKLYKELEDIAVELEFSKKKLQEKITERNDSQSKLDNLHSEYVKENARIKTLKDMENFSLDRAVKGVLDAKLPGVVDIAGNLAKTKGEYKTAIEVAGGARLNHIVVKKMDDGSRAINYLKQKRLGRATFLPMDRIKGMDAKDISDTGIIGKAIDLVEFDIKYTNVFKFIFGNTHIVDNLENAKKLSLKYKARFVTLEGEVIEPSGAMVGGNIRRNSAIKVDIDMKKLTNLSEDIKELEQILSNVKDEIERLNNKINTCSTRKLELDNRLKIARDQEFKKEEITKSNNLKIKELNMLNSKIDDEISELTDEKEILSQKVQNLDNKLSEVMGQRERIVNEIKSYENSELSKRIKEIDHKIRENESSKNTLENEIKKGAILVKEVLIPKISELNSNIKSLADKKNMFKNSVEIYKSNIESNSSILSDKRGKYEELTKGLKDLTDKKECYELEIENLQNNKEELREKATDIDNQVNVINVDRAKYETRLEEEERKLYLCDTLENIEDISDEMIEETYSLEIDDLERNQALLESSIKKLEPVNMRAIEDYDFINERYEELFGKRKEYEQEEGKYLQLISEVQKRKKETFMKTYDRVAENYEQIYGEIGGNGKLSLENEEDPFSGGLLIDASPMNKQLQNLDVMSGGEKSLTALAFLFAIQRLNPSPFYVLDEVDAALDTKNASLIGDMISNASKESQFIVISHREQMISKSNVMYGVCMENGLSKIVSVKL.

An ATP-binding site is contributed by 32-39; sequence PNGSGKSN. Residues 192 to 528 adopt a coiled-coil conformation; it reads GVAEFDEKSE…NARIKTLKDM (337 aa). Residues 546–658 form the SMC hinge domain; it reads PGVVDIAGNL…VDNLENAKKL (113 aa). Residues 691–1051 are a coiled coil; it reads IKVDIDMKKL…YLQLISEVQK (361 aa).

Belongs to the SMC family. In terms of assembly, homodimer.

Its subcellular location is the cytoplasm. Required for chromosome condensation and partitioning. The sequence is that of Chromosome partition protein Smc from Methanococcus voltae.